Consider the following 2200-residue polypeptide: Tyrosine-protein phosphatase Lar-like (2200 aa).

A signal peptide spans 1–42 (MIQFRNKNNSMNRIARHLRNVARRKGSSLLLFLMLSTVLVAA). Residues asparagine 8 and asparagine 116 are each glycosylated (N-linked (GlcNAc...) asparagine). At 43 to 1497 (KEDDPARLVV…LRGASQKSSP (1455 aa)) the chain is on the extracellular side. 3 consecutive Ig-like C2-type domains span residues 47–139 (PARL…ASLT), 151–240 (PQIE…KAAN), and 250–334 (PYFS…TTVI). 2 disulfide bridges follow: cysteine 69-cysteine 122 and cysteine 172-cysteine 225. N-linked (GlcNAc...) asparagine glycans are attached at residues asparagine 269 and asparagine 315. A disulfide bridge links cysteine 272 with cysteine 318. Fibronectin type-III domains follow at residues 341–434 (PPVN…TKPS), 439–535 (APVS…TRQG), 539–628 (QPPM…TIAS), 633–748 (SPTI…TLED), 752–856 (APRN…IPPE), 857–956 (APEI…PVGS), 957–1053 (PDGE…PDPA), 1058–1158 (PPTN…NYMT), and 1181–1287 (MVQN…TGPP). Asparagine 574 carries an N-linked (GlcNAc...) asparagine glycan. Residues asparagine 945, asparagine 988, asparagine 1069, asparagine 1141, asparagine 1212, and asparagine 1330 are each glycosylated (N-linked (GlcNAc...) asparagine). A disordered region spans residues 1355–1392 (LARSLSVSPSKKLKRKASEVGDDSQSASYHPKEKRARR). The chain crosses the membrane as a helical span at residues 1498–1518 (WVGACIAFLVLFSIVGMLICW). Over 1519-2200 (WLRCNKKSAG…EYLAAYDNFS (682 aa)) the chain is Cytoplasmic. 2 consecutive Tyrosine-protein phosphatase domains span residues 1647 to 1902 (FQSE…VLDA) and 1933 to 2192 (IDME…AYEY). Residues aspartate 1811, 1843–1849 (CSAGIGR), and glutamine 1887 each bind substrate. The Phosphocysteine intermediate role is filled by cysteine 1843. The active-site Phosphocysteine intermediate is the cysteine 2133.

The protein belongs to the protein-tyrosine phosphatase family. Receptor class 2A subfamily. In terms of tissue distribution, both isoforms are ubiquitously expressed in early embryos. In later embryos, larvae and adults expression is highest in the nerve ring, dorsal cord, ventral cord and epithelial tissues.

It is found in the cell junction. The protein localises to the adherens junction. It localises to the cell membrane. It carries out the reaction O-phospho-L-tyrosyl-[protein] + H2O = L-tyrosyl-[protein] + phosphate. Functionally, has a role in early neural and epidermal development; neuroblast movements during closure of the gastrulation cleft and epidermal morphogenesis. Vab-1 and ptp-3 may function redundantly within the same sets of neuronal precursors. The polypeptide is Tyrosine-protein phosphatase Lar-like (ptp-3) (Caenorhabditis elegans).